A 116-amino-acid chain; its full sequence is Ferredoxin-like protein in nif region (116 aa).

The region spanning 2–29 (AYTITSQCISCKLCSSVCPTGAIKVAED) is the 4Fe-4S ferredoxin-type domain. The iron-sulfur cluster site is built by cysteine 9, cysteine 12, cysteine 15, and cysteine 19.

The chain is Ferredoxin-like protein in nif region (fdxN) from Trichormus azollae (Anabaena azollae).